The following is a 429-amino-acid chain: Malate dehydrogenase [NADP] 1, chloroplastic (429 aa).

Residues 1–40 constitute a chloroplast transit peptide; it reads MGLSTAYSPVGSHLAPAPLGHRRSAQLHRPRRALLATVRC. A disulfide bond links Cys-64 and Cys-69. 93-99 lines the NADP(+) pocket; that stretch reads GAAGMIS. Residues Arg-174 and Arg-180 each coordinate substrate. NADP(+) contacts are provided by residues Asn-187, Gln-194, and 211-213; that span reads VGN. Substrate is bound by residues Asn-213 and Arg-244. The active-site Proton acceptor is the His-269. Residues Cys-405 and Cys-417 are joined by a disulfide bond.

It belongs to the LDH/MDH superfamily. MDH type 2 family. As to quaternary structure, homodimer.

The protein resides in the plastid. Its subcellular location is the chloroplast. The catalysed reaction is (S)-malate + NADP(+) = oxaloacetate + NADPH + H(+). Its activity is regulated as follows. Chloroplast NADP-MDH is activated upon illumination. In order to be enzymatically active, disulfide bridges on the protein must be reduced by thioredoxin which receives electrons from ferredoxin and the electron transport system of photosynthesis. In terms of biological role, the chloroplastic, NADP-dependent form is essential for the photosynthesis C4 cycle, which allows plants to circumvent the problem of photorespiration. In C4 plants, NADP-MDH activity acts to convert oxaloacetate to malate in chloroplasts of mesophyll cells for transport to the bundle sheath cells. The sequence is that of Malate dehydrogenase [NADP] 1, chloroplastic from Sorghum bicolor (Sorghum).